A 314-amino-acid chain; its full sequence is Olfactory receptor 5P51 (314 aa).

Residues 1–28 (MAFLEDGNHTAVTEFVLFGLTDDPVLRV) are Extracellular-facing. The N-linked (GlcNAc...) asparagine glycan is linked to Asn-8. Residues 29–49 (ILFIIFLCIYLVNVSGNLSTI) form a helical membrane-spanning segment. Residues 50–57 (LLIRVSSQ) are Cytoplasmic-facing. Residues 58–78 (LHHPMYFFLSHLASVDVGYSS) form a helical membrane-spanning segment. At 79 to 102 (TVTPKMLANFLLERSTISYLGCTI) the chain is on the extracellular side. A disulfide bridge links Cys-100 with Cys-192. Residues 103 to 123 (QLFSGAFVGTLECFLLATMAY) form a helical membrane-spanning segment. Residues 124–136 (DRFIAICNPLLYS) lie on the Cytoplasmic side of the membrane. Residues 137–157 (TKMSTQVCIQLLVGSYIGGFL) traverse the membrane as a helical segment. At 158–199 (NASSFLLSFFPLLFCGPNRVNHYSCDLTPLIELSCSGSNVPI) the chain is on the extracellular side. A helical membrane pass occupies residues 200–220 (VPASFCSAFVIIVTVSVIAIS). Residues 221 to 240 (YTYILITILKMRSTEGRQKA) are Cytoplasmic-facing. Residues 241–261 (FSTCTSHLTAVTLYYGTVTFI) traverse the membrane as a helical segment. The Extracellular segment spans residues 262–274 (YVMPKSSYSTDQN). Residues 275–295 (KVVSVFYTVVIPMLNPIIYSL) traverse the membrane as a helical segment. Topologically, residues 296–314 (RNNEIKGALKRQLARKIFS) are cytoplasmic.

Belongs to the G-protein coupled receptor 1 family.

It is found in the cell membrane. Functionally, potential odorant receptor. This Mus musculus (Mouse) protein is Olfactory receptor 5P51.